A 206-amino-acid chain; its full sequence is Methyl-coenzyme M reductase operon protein C (206 aa).

MCR is composed of three subunits: alpha, beta, and gamma. The function of proteins C and D is not known.

The protein is Methyl-coenzyme M reductase operon protein C (mcrC) of Methanosarcina barkeri (strain Fusaro / DSM 804).